We begin with the raw amino-acid sequence, 103 residues long: Cystatin-A (103 aa).

Residue methionine 1 is modified to N-acetylmethionine. Positions 52–56 (QVVAG) match the Secondary area of contact motif.

Belongs to the cystatin family.

The protein localises to the cytoplasm. Its function is as follows. This is an intracellular thiol proteinase inhibitor. This chain is Cystatin-A (Csta), found in Rattus norvegicus (Rat).